The primary structure comprises 274 residues: Acetyl-coenzyme A carboxylase carboxyl transferase subunit beta (274 aa).

Residues 18-274 (IWTKCKKCDY…FYNRQCFLKF (257 aa)) form the CoA carboxyltransferase N-terminal domain. 4 residues coordinate Zn(2+): Cys-22, Cys-25, Cys-41, and Cys-44. The C4-type zinc finger occupies 22–44 (CKKCDYILLQKDFEENLMVCPKC).

The protein belongs to the AccD/PCCB family. As to quaternary structure, acetyl-CoA carboxylase is a heterohexamer composed of biotin carboxyl carrier protein (AccB), biotin carboxylase (AccC) and two subunits each of ACCase subunit alpha (AccA) and ACCase subunit beta (AccD). It depends on Zn(2+) as a cofactor.

It is found in the cytoplasm. The catalysed reaction is N(6)-carboxybiotinyl-L-lysyl-[protein] + acetyl-CoA = N(6)-biotinyl-L-lysyl-[protein] + malonyl-CoA. The protein operates within lipid metabolism; malonyl-CoA biosynthesis; malonyl-CoA from acetyl-CoA: step 1/1. Functionally, component of the acetyl coenzyme A carboxylase (ACC) complex. Biotin carboxylase (BC) catalyzes the carboxylation of biotin on its carrier protein (BCCP) and then the CO(2) group is transferred by the transcarboxylase to acetyl-CoA to form malonyl-CoA. This is Acetyl-coenzyme A carboxylase carboxyl transferase subunit beta from Endomicrobium trichonymphae.